A 170-amino-acid polypeptide reads, in one-letter code: Adenine phosphoribosyltransferase (170 aa).

This sequence belongs to the purine/pyrimidine phosphoribosyltransferase family. In terms of assembly, homodimer.

Its subcellular location is the cytoplasm. The enzyme catalyses AMP + diphosphate = 5-phospho-alpha-D-ribose 1-diphosphate + adenine. It functions in the pathway purine metabolism; AMP biosynthesis via salvage pathway; AMP from adenine: step 1/1. Functionally, catalyzes a salvage reaction resulting in the formation of AMP, that is energically less costly than de novo synthesis. The polypeptide is Adenine phosphoribosyltransferase (Geobacillus kaustophilus (strain HTA426)).